Here is a 315-residue protein sequence, read N- to C-terminus: Ribosomal RNA small subunit methyltransferase H (315 aa).

S-adenosyl-L-methionine is bound by residues 36-38 (GGH), D56, F81, D103, and Q110.

Belongs to the methyltransferase superfamily. RsmH family.

The protein localises to the cytoplasm. It carries out the reaction cytidine(1402) in 16S rRNA + S-adenosyl-L-methionine = N(4)-methylcytidine(1402) in 16S rRNA + S-adenosyl-L-homocysteine + H(+). In terms of biological role, specifically methylates the N4 position of cytidine in position 1402 (C1402) of 16S rRNA. This Idiomarina loihiensis (strain ATCC BAA-735 / DSM 15497 / L2-TR) protein is Ribosomal RNA small subunit methyltransferase H.